Reading from the N-terminus, the 670-residue chain is MAPGQMPHQPAPWRGTHPLFLLSPLMGLLSRAWSLLRAPGPPEPWLVEAVTEADQGGAGLEDEAKASLATYHALWGRHPQEETKDSGAAEEDREASPGACPNLEAKHSLPEAWGLSDDDDEKYGGEEATGVPREQKEFMDGQPAPLPLSLLIRSLPDLPGEEESKEEAVTGGGGNEVTAFSFPLSHWECCPGEEEEEEEENGEAVRVCRPVNGATEERTQTEAATKTSMSPSSVGSHLRAWECCSGKESEEEEKDKQAEKGDADPGPHFTSLAQRPSLRTWQHPSSAITEEEEDRDSEEMGASSSVPLTSAFLSDWVYQPEDTEEEDEEEEDCDSEATEDEGEAEVSSATPPPSAFLSAWVYRPGEDTEEEEDCDSEATEDEGEAEVSSATPPTSAFLSAWVYQPGDTEEEEDCDSEATEDEGEAEVSSATPPPSAFLSAWVYRPGEDTEEEDEYEDEDNESGAADLGPSPSLQTQSALLRDQIYQPGEKTDGGEAAEKWGEAESCPFRVAIYLPGEKPPPPWDPPRLPLRLQRRLKSAQTPTRHQDLERLLKTRKVRFSEKVSIHPLVVWAGPAQAARRGPWEQFARDRSRFARRIAQVQEELGPYLTPAARARAWARLGNPPTSLATVPAPTQTSPMTPIQATPLSHALASPSPPCVSPSLDLSGRRG.

The Cytoplasmic portion of the chain corresponds to 1-21 (MAPGQMPHQPAPWRGTHPLFL). Residues 1–60 (MAPGQMPHQPAPWRGTHPLFLLSPLMGLLSRAWSLLRAPGPPEPWLVEAVTEADQGGAGL) are required for localization in the endoplasmic reticulum. The segment at residues 22-39 (LSPLMGLLSRAWSLLRAP) is an intramembrane region (helical). Topologically, residues 40-670 (GPPEPWLVEA…PSLDLSGRRG (631 aa)) are cytoplasmic. 3 disordered regions span residues 76 to 144 (GRHP…GQPA), 159 to 178 (PGEE…NEVT), and 191 to 501 (PGEE…EKWG). Over residues 78 to 87 (HPQEETKDSG) the composition is skewed to basic and acidic residues. Residues 191 to 202 (PGEEEEEEEENG) show a composition bias toward acidic residues. A compositionally biased stretch (basic and acidic residues) spans 254–265 (KDKQAEKGDADP). Over residues 271–288 (SLAQRPSLRTWQHPSSAI) the composition is skewed to polar residues. The segment covering 289 to 299 (TEEEEDRDSEE) has biased composition (acidic residues). Residues 302 to 312 (ASSSVPLTSAF) are compositionally biased toward polar residues. Composition is skewed to acidic residues over residues 321 to 344 (EDTE…EGEA) and 367 to 385 (DTEE…EGEA). 4 consecutive repeat copies span residues 355 to 381 (AFLS…ATED), 396 to 426 (AFLS…GEAE), 436 to 462 (AFLS…DNES), and 478 to 511 (ALLR…FRVA). The tract at residues 355-511 (AFLSAWVYRP…EAESCPFRVA (157 aa)) is 4 X 34 AA approximate repeats. Residues 355–511 (AFLSAWVYRP…EAESCPFRVA (157 aa)) form an interaction with SMAD7 region. The segment covering 388-397 (SSATPPTSAF) has biased composition (polar residues). The residue at position 403 (Tyr-403) is a Phosphotyrosine. Acidic residues predominate over residues 407-425 (DTEEEEDCDSEATEDEGEA). Phosphotyrosine is present on Tyr-443. The span at 448 to 461 (DTEEEDEYEDEDNE) shows a compositional bias: acidic residues. Residues 484–556 (IYQPGEKTDG…DLERLLKTRK (73 aa)) are interaction with KMT2A/MLL1. The segment covering 489–501 (EKTDGGEAAEKWG) has biased composition (basic and acidic residues). Residue Tyr-513 is modified to Phosphotyrosine. The tract at residues 537 to 584 (KSAQTPTRHQDLERLLKTRKVRFSEKVSIHPLVVWAGPAQAARRGPWE) is interaction with SMARCB1. Residues 622–670 (NPPTSLATVPAPTQTSPMTPIQATPLSHALASPSPPCVSPSLDLSGRRG) are disordered. A compositionally biased stretch (polar residues) spans 623 to 645 (PPTSLATVPAPTQTSPMTPIQAT).

It belongs to the PPP1R15 family. As to quaternary structure, interacts with PPP1CA. Interacts with EIF2S1. Interacts with PCNA. Interacts with LYN and KMT2A/MLL1. Interacts with PPP1R1A and SMARCB1. Interacts with SMAD7. Interacts with BAG1. Interacts with NOX4. In terms of processing, phosphorylated on tyrosine by LYN; which impairs its antiproliferative activity. Post-translationally, polyubiquitinated. Exhibits a rapid proteasomal degradation with a half-life under 1 hour, ubiquitination depends on endoplasmic reticulum association.

It is found in the endoplasmic reticulum membrane. The protein resides in the mitochondrion outer membrane. Functionally, recruits the serine/threonine-protein phosphatase PPP1CA to prevents excessive phosphorylation of the translation initiation factor eIF-2A/EIF2S1, thereby reversing the shut-off of protein synthesis initiated by stress-inducible kinases and facilitating recovery of cells from stress. Down-regulates the TGF-beta signaling pathway by promoting dephosphorylation of TGFB1 by PP1. May promote apoptosis by inducing TP53 phosphorylation on 'Ser-15'. Plays an essential role in autophagy by tuning translation during starvation, thus enabling lysosomal biogenesis and a sustained autophagic flux. This chain is Protein phosphatase 1 regulatory subunit 15A (PPP1R15A), found in Bos taurus (Bovine).